We begin with the raw amino-acid sequence, 166 residues long: Protein UL5 (166 aa).

This sequence belongs to the RL11 family. Interacts with host IQGAP1.

Its subcellular location is the host cytoplasm. May play a role in rearrangement of cellular cytoskeleton towards an efficient viral assembly and spreading. The protein is Protein UL5 (UL5) of Human cytomegalovirus (strain AD169) (HHV-5).